A 623-amino-acid polypeptide reads, in one-letter code: Low affinity potassium transport system protein Kup (623 aa).

A run of 12 helical transmembrane segments spans residues 10-30 (LSAV…TSPL), 47-67 (PDVV…IVSV), 102-122 (ILVI…VITP), 138-158 (PALD…LFVI), 166-186 (VGKL…LLGL), 214-234 (VSFF…ALYA), 248-268 (WFTV…ALLL), 277-297 (PFFL…ATLA), 338-358 (IYIP…IVGF), 364-384 (LAAA…VLFC), 396-416 (FFVY…FSAN), and 420-440 (LFSG…IMTT).

It belongs to the HAK/KUP transporter (TC 2.A.72) family.

The protein resides in the cell inner membrane. The catalysed reaction is K(+)(in) + H(+)(in) = K(+)(out) + H(+)(out). Responsible for the low-affinity transport of potassium into the cell. Likely operates as a K(+):H(+) symporter. The sequence is that of Low affinity potassium transport system protein Kup from Yersinia enterocolitica serotype O:8 / biotype 1B (strain NCTC 13174 / 8081).